The following is a 112-amino-acid chain: Photosystem II reaction center Psb28 protein (112 aa).

Belongs to the Psb28 family. As to quaternary structure, part of the photosystem II complex.

The protein localises to the cellular thylakoid membrane. The polypeptide is Photosystem II reaction center Psb28 protein (Synechococcus elongatus (strain ATCC 33912 / PCC 7942 / FACHB-805) (Anacystis nidulans R2)).